A 298-amino-acid chain; its full sequence is Tyrosine recombinase XerC (298 aa).

The Core-binding (CB) domain occupies 2-88 (TDLHTDVERY…ALRSFFDWLV (87 aa)). Residues 109–288 (HLPKNIDVDD…DFQHLASVYD (180 aa)) form the Tyr recombinase domain. Catalysis depends on residues arginine 148, lysine 172, histidine 240, arginine 243, and histidine 266. Tyrosine 275 acts as the O-(3'-phospho-DNA)-tyrosine intermediate in catalysis.

This sequence belongs to the 'phage' integrase family. XerC subfamily. In terms of assembly, forms a cyclic heterotetrameric complex composed of two molecules of XerC and two molecules of XerD, in which XerC interacts with XerD via its C-terminal region, XerD interacts with XerC via its C-terminal region and so on.

The protein resides in the cytoplasm. FtsK may regulate the catalytic switch between XerC and XerD in the heterotetrameric complex during the two steps of the recombination process. Functionally, site-specific tyrosine recombinase, which acts by catalyzing the cutting and rejoining of the recombining DNA molecules. Binds cooperatively to specific DNA consensus sequences that are separated from XerD binding sites by a short central region, forming the heterotetrameric XerC-XerD complex that recombines DNA substrates. The complex is essential to convert dimers of the bacterial chromosome into monomers to permit their segregation at cell division. It also contributes to the segregational stability of plasmids. In the complex XerC specifically exchanges the top DNA strands. The sequence is that of Tyrosine recombinase XerC from Escherichia coli (strain 55989 / EAEC).